We begin with the raw amino-acid sequence, 117 residues long: uncharacterized protein (117 aa).

This sequence to H.influenzae HI_1162 and to HI_0925.

This is an uncharacterized protein from Escherichia coli (strain K12).